A 441-amino-acid chain; its full sequence is Tol-Pal system protein TolB (441 aa).

A signal peptide spans 1–39; it reads MPAMTPAFRRADLTGFLRTYGAALILLLAAMLAWQPAQA.

Belongs to the TolB family. The Tol-Pal system is composed of five core proteins: the inner membrane proteins TolA, TolQ and TolR, the periplasmic protein TolB and the outer membrane protein Pal. They form a network linking the inner and outer membranes and the peptidoglycan layer.

Its subcellular location is the periplasm. Functionally, part of the Tol-Pal system, which plays a role in outer membrane invagination during cell division and is important for maintaining outer membrane integrity. This chain is Tol-Pal system protein TolB, found in Bordetella parapertussis (strain 12822 / ATCC BAA-587 / NCTC 13253).